A 93-amino-acid polypeptide reads, in one-letter code: Antitoxin EndoAI (93 aa).

This sequence belongs to the MazE/EndoAI family. As to quaternary structure, homodimer, forms a heterohexamer composed of alternating toxin and antitoxin homodimers which inhibits the toxin's endoribonuclease activity. Antitoxin prevents RNA binding to the endoribonuclease.

Its function is as follows. Antitoxin component of a type II toxin-antitoxin (TA) system. Antitoxin that directly inhibits activity of EndoA in vitro. Upon expression in E.coli counteracts inhibitory effect of endoribonuclease EndoA. The EndoA-EndoAI complex does not seem to bind its own promoter. The polypeptide is Antitoxin EndoAI (Bacillus subtilis (strain 168)).